The following is a 150-amino-acid chain: UPF0102 protein sll0189 (150 aa).

This sequence belongs to the UPF0102 family.

This is UPF0102 protein sll0189 from Synechocystis sp. (strain ATCC 27184 / PCC 6803 / Kazusa).